A 676-amino-acid chain; its full sequence is LIM domain-containing protein 1 (676 aa).

Residues 54–134 (KIHLQQQQQQ…PPYPPQEQRS (81 aa)) form a mediates nuclear export region. 2 disordered regions span residues 104 to 163 (KPPL…SAFH) and 189 to 389 (KWGD…TSLV). A Phosphoserine modification is found at Ser145. Residues 186-260 (ASPKWGDKPG…IGGRSSEKPT (75 aa)) are interaction with EGLN1/PHD2. Low complexity-rich tracts occupy residues 201–213 (GLSV…SSPG) and 232–242 (LSLSSSRSSEG). 2 positions are modified to phosphoserine: Ser233 and Ser239. A compositionally biased stretch (gly residues) spans 243 to 253 (SLGGQNSGIGG). The segment covering 262–271 (LWSTASSQRV) has biased composition (polar residues). A phosphoserine mark is found at Ser272, Ser277, Ser304, and Ser316. Positions 343 to 360 (SYLSSSAPSSSPAGLDGS) are enriched in low complexity. The interaction with RB1 stretch occupies residues 404–442 (GPLGWSSDGSLGSVLLDSPSSPRVRLPCQPLVPGPELRP). A phosphoserine mark is found at Ser421 and Ser424. 3 LIM zinc-binding domains span residues 470 to 531 (GACV…SGFQ), 535 to 595 (DRCF…VLAP), and 595 to 664 (PKCA…RLEK). Residues 472-676 (CVKCSKGVFG…SSTALHQHHF (205 aa)) are necessary for nuclear localization.

This sequence belongs to the zyxin/ajuba family. In terms of assembly, interacts (via LIM domains) with TRAF6. Found in a complex with TRAF6, PRKCZ and SQSTM1. Interacts (via LIM domains) SNAI2/SLUG (via SNAG domain) and SCRT1 (via SNAG domain). Interacts with SQSTM1 and RB1. Found in a complex composed of LIMD1, VHL, EGLN1/PHD2, ELOB and CUL2. Interacts with EIF4E, AGO1, AGO2, DCP2, DDX6, LATS1, LATS2, EGLN1/PHD2, EGLN2/PHD1 and EGLN3/PHD3. Interacts (via LIM zinc-binding 2) with isoform 1 and isoform 3 of VHL. Interacts (via LIM domains) with SNAI1 (via SNAG domain). In terms of processing, phosphorylated during mitosis. Expressed in normal and breast cancer tissues (at protein level). Ubiquitous.

Its subcellular location is the cytoplasm. It is found in the nucleus. The protein resides in the P-body. The protein localises to the cell junction. It localises to the adherens junction. Its subcellular location is the focal adhesion. In terms of biological role, adapter or scaffold protein which participates in the assembly of numerous protein complexes and is involved in several cellular processes such as cell fate determination, cytoskeletal organization, repression of gene transcription, cell-cell adhesion, cell differentiation, proliferation and migration. Positively regulates microRNA (miRNA)-mediated gene silencing and is essential for P-body formation and integrity. Acts as a hypoxic regulator by bridging an association between the prolyl hydroxylases and VHL enabling efficient degradation of HIF1A. Acts as a transcriptional corepressor for SNAI1- and SNAI2/SLUG-dependent repression of E-cadherin transcription. Negatively regulates the Hippo signaling pathway and antagonizes phosphorylation of YAP1. Inhibits E2F-mediated transcription, and suppresses the expression of the majority of genes with E2F1-responsive elements. Regulates osteoblast development, function, differentiation and stress osteoclastogenesis. Enhances the ability of TRAF6 to activate adapter protein complex 1 (AP-1) and negatively regulates the canonical Wnt receptor signaling pathway in osteoblasts. May act as a tumor suppressor by inhibiting cell proliferation. The chain is LIM domain-containing protein 1 (LIMD1) from Homo sapiens (Human).